The primary structure comprises 508 residues: UDP-N-acetylmuramyl-tripeptide synthetase (508 aa).

Serine 35 contacts UDP-N-acetyl-alpha-D-muramoyl-L-alanyl-D-glutamate. 118 to 124 (GTDGKSS) is an ATP binding site. UDP-N-acetyl-alpha-D-muramoyl-L-alanyl-D-glutamate is bound by residues 163 to 164 (ST), threonine 190, and arginine 200. Lysine 232 is modified (N6-carboxylysine).

It belongs to the MurCDEF family. MurE subfamily. Post-translationally, carboxylation is probably crucial for Mg(2+) binding and, consequently, for the gamma-phosphate positioning of ATP.

The protein localises to the cytoplasm. It functions in the pathway cell wall biogenesis; peptidoglycan biosynthesis. Catalyzes the addition of an amino acid to the nucleotide precursor UDP-N-acetylmuramoyl-L-alanyl-D-glutamate (UMAG) in the biosynthesis of bacterial cell-wall peptidoglycan. The chain is UDP-N-acetylmuramyl-tripeptide synthetase from Borrelia garinii subsp. bavariensis (strain ATCC BAA-2496 / DSM 23469 / PBi) (Borreliella bavariensis).